The sequence spans 258 residues: Ribosomal RNA large subunit methyltransferase E (258 aa).

Residues Gly58, Trp60, Asp78, Asp96, and Asp120 each coordinate S-adenosyl-L-methionine. Lys160 (proton acceptor) is an active-site residue.

Belongs to the class I-like SAM-binding methyltransferase superfamily. RNA methyltransferase RlmE family.

The protein localises to the cytoplasm. It catalyses the reaction uridine(2552) in 23S rRNA + S-adenosyl-L-methionine = 2'-O-methyluridine(2552) in 23S rRNA + S-adenosyl-L-homocysteine + H(+). Functionally, specifically methylates the uridine in position 2552 of 23S rRNA at the 2'-O position of the ribose in the fully assembled 50S ribosomal subunit. The protein is Ribosomal RNA large subunit methyltransferase E of Methanococcus maripaludis (strain C5 / ATCC BAA-1333).